Here is a 306-residue protein sequence, read N- to C-terminus: Pantothenate kinase (306 aa).

91–98 is an ATP binding site; sequence GSVAVGKS.

The protein belongs to the prokaryotic pantothenate kinase family.

It localises to the cytoplasm. It carries out the reaction (R)-pantothenate + ATP = (R)-4'-phosphopantothenate + ADP + H(+). It participates in cofactor biosynthesis; coenzyme A biosynthesis; CoA from (R)-pantothenate: step 1/5. This chain is Pantothenate kinase, found in Streptococcus equi subsp. equi (strain 4047).